Consider the following 91-residue polypeptide: Small ribosomal subunit protein bS20 (91 aa).

Residues M1–R25 are disordered. The span at E8 to R20 shows a compositional bias: basic residues.

This sequence belongs to the bacterial ribosomal protein bS20 family.

Its function is as follows. Binds directly to 16S ribosomal RNA. This chain is Small ribosomal subunit protein bS20, found in Myxococcus xanthus (strain DK1622).